The primary structure comprises 578 residues: ATP-dependent RNA helicase has-1 (578 aa).

Positions 1–91 are disordered; the sequence is MASEFSKKRK…KDAEAGDELT (91 aa). Residues 13–26 show a composition bias toward basic and acidic residues; it reads DAKIATEDGAATDK. Positions 27–36 are enriched in basic residues; it reads KTKKVKKDKK. Acidic residues-rich tracts occupy residues 43 to 54 and 77 to 88; these read EVVEDATPEEEN and EDSDDKDAEAGD. The short motif at 107–135 is the Q motif element; that stretch reads TDFSELNLSDKTMKAIAEMGFTKMTEIQR. Residues 138–313 enclose the Helicase ATP-binding domain; sequence IPPLLAGKDV…RISLRPGPLY (176 aa). 151–158 contacts ATP; sequence AKTGSGKT. The DEAD box motif lies at 260-263; that stretch reads DEAD. The Bipartite nuclear localization signal signature appears at 339-355; sequence KRFLLLFSFLKKMQKKK. The 155-residue stretch at 343 to 497 folds into the Helicase C-terminal domain; sequence LLFSFLKKMQ…NVQSQLEKLI (155 aa). The disordered stretch occupies residues 556–578; it reads SMSRDKKQTSRRAYGSQPKQNRH.

The protein belongs to the DEAD box helicase family. DDX18/HAS1 subfamily. Associates in the nucleolus with the 60S and pre-60S ribosomal subunits.

The protein resides in the nucleus. Its subcellular location is the nucleolus. It carries out the reaction ATP + H2O = ADP + phosphate + H(+). Its function is as follows. ATP-dependent RNA helicase involved in 40S ribosomal subunit biogenesis. Required for the processing and cleavage of 35S pre-rRNA at sites A0, A1, and A2, leading to mature 18S rRNA. This Neurospora crassa (strain ATCC 24698 / 74-OR23-1A / CBS 708.71 / DSM 1257 / FGSC 987) protein is ATP-dependent RNA helicase has-1 (has-1).